A 263-amino-acid polypeptide reads, in one-letter code: 3'-5' ssDNA/RNA exonuclease TatD (263 aa).

Positions 91, 127, and 152 each coordinate a divalent metal cation.

Belongs to the metallo-dependent hydrolases superfamily. TatD-type hydrolase family. TatD subfamily. As to quaternary structure, monomer. The cofactor is Mg(2+).

It localises to the cytoplasm. In terms of biological role, 3'-5' exonuclease that prefers single-stranded DNA and RNA. May play a role in the H(2)O(2)-induced DNA damage repair. This Citrobacter rodentium (strain ICC168) (Citrobacter freundii biotype 4280) protein is 3'-5' ssDNA/RNA exonuclease TatD.